A 313-amino-acid chain; its full sequence is Ribosomal RNA small subunit methyltransferase H (313 aa).

S-adenosyl-L-methionine contacts are provided by residues 35–37 (GGH), Asp-55, Phe-81, Asp-103, and Gln-110.

Belongs to the methyltransferase superfamily. RsmH family.

It is found in the cytoplasm. The catalysed reaction is cytidine(1402) in 16S rRNA + S-adenosyl-L-methionine = N(4)-methylcytidine(1402) in 16S rRNA + S-adenosyl-L-homocysteine + H(+). Its function is as follows. Specifically methylates the N4 position of cytidine in position 1402 (C1402) of 16S rRNA. The chain is Ribosomal RNA small subunit methyltransferase H from Pseudomonas aeruginosa (strain LESB58).